Here is a 205-residue protein sequence, read N- to C-terminus: Ribosomal RNA large subunit methyltransferase E (205 aa).

Positions 60, 62, 80, 96, and 121 each coordinate S-adenosyl-L-methionine. Residue Lys-161 is the Proton acceptor of the active site.

The protein belongs to the class I-like SAM-binding methyltransferase superfamily. RNA methyltransferase RlmE family.

The protein localises to the cytoplasm. It carries out the reaction uridine(2552) in 23S rRNA + S-adenosyl-L-methionine = 2'-O-methyluridine(2552) in 23S rRNA + S-adenosyl-L-homocysteine + H(+). Specifically methylates the uridine in position 2552 of 23S rRNA at the 2'-O position of the ribose in the fully assembled 50S ribosomal subunit. This chain is Ribosomal RNA large subunit methyltransferase E, found in Dechloromonas aromatica (strain RCB).